A 376-amino-acid chain; its full sequence is Spermidine/putrescine import ATP-binding protein PotA (376 aa).

In terms of domain architecture, ABC transporter spans 6–236 (INIVNVNKSF…PADTFVADFL (231 aa)). Residue 38-45 (GPSGCGKT) coordinates ATP.

It belongs to the ABC transporter superfamily. Spermidine/putrescine importer (TC 3.A.1.11.1) family. As to quaternary structure, the complex is composed of two ATP-binding proteins (PotA), two transmembrane proteins (PotB and PotC) and a solute-binding protein (PotD).

The protein localises to the cell inner membrane. The enzyme catalyses ATP + H2O + polyamine-[polyamine-binding protein]Side 1 = ADP + phosphate + polyamineSide 2 + [polyamine-binding protein]Side 1.. Its function is as follows. Part of the ABC transporter complex PotABCD involved in spermidine/putrescine import. Responsible for energy coupling to the transport system. The protein is Spermidine/putrescine import ATP-binding protein PotA of Fusobacterium nucleatum subsp. nucleatum (strain ATCC 25586 / DSM 15643 / BCRC 10681 / CIP 101130 / JCM 8532 / KCTC 2640 / LMG 13131 / VPI 4355).